The following is a 955-amino-acid chain: Kinesin-like protein KIN-14L (955 aa).

The Calponin-homology (CH) domain maps to 19-140 (AARRFQAVQW…CILGLKAYHE (122 aa)). The Kinesin motor domain occupies 363–685 (NIRVYCRVRP…LKFAQRVSTV (323 aa)). Residue 445 to 452 (GQTGSGKT) coordinates ATP. A coiled-coil region spans residues 692 to 719 (AHKETREVMHLKEQIENLKRALGTEEWN). Positions 878–942 (RKENIPADPR…GKPIENGKKD (65 aa)) are disordered. The segment covering 894–916 (NNFSHIKSPDTSNAKTMRRQSLT) has biased composition (polar residues).

It belongs to the TRAFAC class myosin-kinesin ATPase superfamily. Kinesin family. KIN-14 subfamily.

The chain is Kinesin-like protein KIN-14L from Arabidopsis thaliana (Mouse-ear cress).